The primary structure comprises 365 residues: Probable L-tyrosine/L-aspartate decarboxylase (365 aa).

The residue at position 224 (Lys224) is an N6-(pyridoxal phosphate)lysine.

Belongs to the group II decarboxylase family. MfnA subfamily. Pyridoxal 5'-phosphate is required as a cofactor.

It catalyses the reaction L-tyrosine + H(+) = tyramine + CO2. The catalysed reaction is L-aspartate + H(+) = beta-alanine + CO2. It functions in the pathway cofactor biosynthesis; methanofuran biosynthesis. The protein operates within cofactor biosynthesis; coenzyme A biosynthesis. Functionally, catalyzes the decarboxylation of L-tyrosine to produce tyramine for methanofuran biosynthesis. Can also catalyze the decarboxylation of L-aspartate to produce beta-alanine for coenzyme A (CoA) biosynthesis. This is Probable L-tyrosine/L-aspartate decarboxylase from Methanoculleus marisnigri (strain ATCC 35101 / DSM 1498 / JR1).